The primary structure comprises 397 residues: LIM/homeobox protein Lhx9 (397 aa).

2 LIM zinc-binding domains span residues 69–130 (ALCA…RFSV) and 131–193 (QRCA…LLQG). Disordered stretches follow at residues 248–272 (ENEA…RMRT), 330–365 (ENGG…LTDL), and 378–397 (SNMD…TNLF). The segment at residues 267–326 (TKRMRTSFKHHQLRTMKSYFAINHNPDAKDLKQLAQKTGLTKRVLQVWFQNARAKFRRNL) is a DNA-binding region (homeobox). Positions 353–365 (LTPPGTATTLTDL) are enriched in low complexity. The span at 387–397 (SPSQTTLTNLF) shows a compositional bias: polar residues.

As to quaternary structure, interacts with LDB1 and LDB2. In terms of tissue distribution, expressed in the dorsal thalamus and inner nuclei of the cerebellum.

Its subcellular location is the nucleus. Its function is as follows. Involved in gonadal development. In Mus musculus (Mouse), this protein is LIM/homeobox protein Lhx9 (Lhx9).